A 195-amino-acid chain; its full sequence is 22.0 kDa heat shock protein (195 aa).

Positions 1 to 21 (MMKHLLSIFFIGALLLGNIKT) are cleaved as a signal peptide. Positions 62 to 180 (RDTSVALSPA…GPRVVNIAAE (119 aa)) constitute a sHSP domain. Asn-160 carries N-linked (GlcNAc...) asparagine glycosylation.

The protein belongs to the small heat shock protein (HSP20) family. In terms of assembly, may form oligomeric structures.

It localises to the endoplasmic reticulum. This Arabidopsis thaliana (Mouse-ear cress) protein is 22.0 kDa heat shock protein (HSP22.0).